The primary structure comprises 336 residues: Probable ADP-ribosylation factor GTPase-activating protein AGD13 (336 aa).

Positions 15–137 (KRRIRDLLNQ…EFLKPSLRIT (123 aa)) constitute an Arf-GAP domain. The segment at 30 to 53 (CADCGASDPKWASANIGVFICLKC) adopts a C4-type zinc-finger fold. Residues 162-280 (RTNSSSQTMF…AMAFGDPEMF (119 aa)) form the C2 domain. Residues aspartate 249, serine 252, and aspartate 255 each contribute to the Ca(2+) site.

The cofactor is Ca(2+).

Its function is as follows. GTPase-activating protein (GAP) for ADP ribosylation factor (ARF). The sequence is that of Probable ADP-ribosylation factor GTPase-activating protein AGD13 (AGD13) from Arabidopsis thaliana (Mouse-ear cress).